The primary structure comprises 576 residues: MNILELSEQEIIRRNSLNELRAMGIDPYPAAEYVTNAFSTDIKAEFKDEDEPRQVSVAGRIMSRRVMGKASFIELQDSKGRIQVYITRDDICPGEDKELYNSVFKRLLDLGDFVGIEGFVFRTQMGEISIHAKKLTVLAKSIKPLPIVKYKDGVAYDSFEDPELRYRQRYVDLVVNEGIKETFEKRATVVRTLRNALDEAGYTEVETPILQSIAGGASARPFITHHNSLDIDLYLRIATELYLKRLIVGGFEGVYEIGKNFRNEGMDRTHNPEFTCMELYVQYKDYNWMMSFTEKLLERICIAVNGSTETVVDGKTISFKAPYRRLPILDAIKEKTGYDLNGKSEEEIRQICKELKMEEIDDTMGKGKLIDEIFGEFCEGSYIQPTFITDYPVEMSPLTKMHRSKPGLTERFELMVNGKELANAYSELNDPLDQEERFKEQMRLADKGDDEAMIIDQDFLRALQYGMPPTSGIGIGIDRLVMLMTGQTTIQEVLFFPQMRPEKVIKKDPAAKYMELGIAEDWVPVIQKAGYNTVADMQDVNPQKLHQDICGINKKYKLELTNPSVNDVTEWINKLK.

Mg(2+)-binding residues include E413 and E420.

Belongs to the class-II aminoacyl-tRNA synthetase family. In terms of assembly, homodimer. Mg(2+) serves as cofactor.

It is found in the cytoplasm. It catalyses the reaction tRNA(Lys) + L-lysine + ATP = L-lysyl-tRNA(Lys) + AMP + diphosphate. The protein is Lysine--tRNA ligase of Bacteroides thetaiotaomicron (strain ATCC 29148 / DSM 2079 / JCM 5827 / CCUG 10774 / NCTC 10582 / VPI-5482 / E50).